The primary structure comprises 831 residues: AMP deaminase (831 aa).

3 disordered regions span residues 26–45 (NPGA…QDTP), 66–110 (NGTQ…KLLN), and 130–149 (NAVV…METT). Residues Ser-79 and Ser-84 each carry the phosphoserine modification. Zn(2+) contacts are provided by His-319 and His-321. Substrate contacts are provided by residues His-321 and 390–395 (KFNLKY). His-587 contributes to the Zn(2+) binding site. A substrate-binding site is contributed by Glu-590. His-609 (proton acceptor) is an active-site residue. A Zn(2+)-binding site is contributed by Asp-664. 665-668 (DPLQ) provides a ligand contact to substrate. A phosphoserine mark is found at Ser-758, Ser-776, Ser-780, and Ser-782.

It belongs to the metallo-dependent hydrolases superfamily. Adenosine and AMP deaminases family. Homotetramer. It depends on Zn(2+) as a cofactor.

Its subcellular location is the cytoplasm. It carries out the reaction AMP + H2O + H(+) = IMP + NH4(+). It participates in purine metabolism; IMP biosynthesis via salvage pathway; IMP from AMP: step 1/1. Its function is as follows. AMP deaminase plays a critical role in energy metabolism. This chain is AMP deaminase (ada1), found in Schizosaccharomyces pombe (strain 972 / ATCC 24843) (Fission yeast).